A 273-amino-acid chain; its full sequence is Dermonecrotic toxin LamSicTox-alphaIC1 (273 aa).

Histidine 5 is an active-site residue. Mg(2+) contacts are provided by glutamate 25 and aspartate 27. Histidine 41 functions as the Nucleophile in the catalytic mechanism. 2 disulfide bridges follow: cysteine 45-cysteine 51 and cysteine 47-cysteine 190. Aspartate 85 lines the Mg(2+) pocket.

It belongs to the arthropod phospholipase D family. Class II subfamily. Mg(2+) serves as cofactor. In terms of tissue distribution, expressed by the venom gland.

The protein localises to the secreted. The enzyme catalyses an N-(acyl)-sphingosylphosphocholine = an N-(acyl)-sphingosyl-1,3-cyclic phosphate + choline. It carries out the reaction an N-(acyl)-sphingosylphosphoethanolamine = an N-(acyl)-sphingosyl-1,3-cyclic phosphate + ethanolamine. The catalysed reaction is a 1-acyl-sn-glycero-3-phosphocholine = a 1-acyl-sn-glycero-2,3-cyclic phosphate + choline. It catalyses the reaction a 1-acyl-sn-glycero-3-phosphoethanolamine = a 1-acyl-sn-glycero-2,3-cyclic phosphate + ethanolamine. Dermonecrotic toxins cleave the phosphodiester linkage between the phosphate and headgroup of certain phospholipids (sphingolipid and lysolipid substrates), forming an alcohol (often choline) and a cyclic phosphate. This toxin acts on sphingomyelin (SM). It may also act on ceramide phosphoethanolamine (CPE), lysophosphatidylcholine (LPC) and lysophosphatidylethanolamine (LPE), but not on lysophosphatidylserine (LPS), and lysophosphatidylglycerol (LPG). It acts by transphosphatidylation, releasing exclusively cyclic phosphate products as second products. Induces dermonecrosis, hemolysis, increased vascular permeability, edema, inflammatory response, and platelet aggregation. This chain is Dermonecrotic toxin LamSicTox-alphaIC1, found in Loxosceles amazonica (Recluse spider).